The following is a 232-amino-acid chain: MAIDLGCHVGCASPETKQEETADPTAAPVVVDDVEAAAGGRRPGDGGGVNYVARAQWLRAAVLGANDGLVSVASLMVGVGAANGTRRAMLVSGLAGLVAGACSMAIGEFVSVYAQCDIQAAQIERARGGKDADGGEEEEELPSPTMAAVASALSFAAGAALPLLAGGFVRPWAARVAAVCAASSLGLAGFGVASAYLGGAGVARSGVRMLVGGWLAMAVTYGVLKLFGMHGV.

Residues 1–59 are Cytoplasmic-facing; sequence MAIDLGCHVGCASPETKQEETADPTAAPVVVDDVEAAAGGRRPGDGGGVNYVARAQWLR. Residues 60–80 form a helical membrane-spanning segment; the sequence is AAVLGANDGLVSVASLMVGVG. Over 81 to 89 the chain is Vacuolar; that stretch reads AANGTRRAM. The chain crosses the membrane as a helical span at residues 90–110; it reads LVSGLAGLVAGACSMAIGEFV. Residues 111-148 are Cytoplasmic-facing; sequence SVYAQCDIQAAQIERARGGKDADGGEEEEELPSPTMAA. The helical transmembrane segment at 149–169 threads the bilayer; sequence VASALSFAAGAALPLLAGGFV. Over 170 to 175 the chain is Vacuolar; the sequence is RPWAAR. A helical transmembrane segment spans residues 176-196; the sequence is VAAVCAASSLGLAGFGVASAY. Residues 197 to 208 lie on the Cytoplasmic side of the membrane; the sequence is LGGAGVARSGVR. Residues 209 to 229 form a helical membrane-spanning segment; the sequence is MLVGGWLAMAVTYGVLKLFGM. At 230 to 232 the chain is on the vacuolar side; that stretch reads HGV.

This sequence belongs to the CCC1 family.

It localises to the vacuole membrane. The enzyme catalyses Fe(2+)(in) = Fe(2+)(out). In terms of biological role, probable vacuolar iron transporter that may be involved in the regulation of iron distribution throughout the plant. The sequence is that of Vacuolar iron transporter homolog 1 from Oryza sativa subsp. japonica (Rice).